We begin with the raw amino-acid sequence, 978 residues long: Glycine dehydrogenase (decarboxylating) (978 aa).

Residue lysine 726 is modified to N6-(pyridoxal phosphate)lysine.

It belongs to the GcvP family. As to quaternary structure, the glycine cleavage system is composed of four proteins: P, T, L and H. It depends on pyridoxal 5'-phosphate as a cofactor.

The catalysed reaction is N(6)-[(R)-lipoyl]-L-lysyl-[glycine-cleavage complex H protein] + glycine + H(+) = N(6)-[(R)-S(8)-aminomethyldihydrolipoyl]-L-lysyl-[glycine-cleavage complex H protein] + CO2. Functionally, the glycine cleavage system catalyzes the degradation of glycine. The P protein binds the alpha-amino group of glycine through its pyridoxal phosphate cofactor; CO(2) is released and the remaining methylamine moiety is then transferred to the lipoamide cofactor of the H protein. This chain is Glycine dehydrogenase (decarboxylating), found in Paraburkholderia phytofirmans (strain DSM 17436 / LMG 22146 / PsJN) (Burkholderia phytofirmans).